Reading from the N-terminus, the 798-residue chain is Interphotoreceptor matrix proteoglycan 1 (798 aa).

A signal peptide spans 1-20 (MNLEIKHAILVLWIFLQVQG). Residue asparagine 142 is glycosylated (N-linked (GlcNAc...) asparagine). An SEA 1 domain is found at 238-360 (SEEKVEFSIS…PEAYLTAADL (123 aa)). O-linked (GalNAc...) threonine glycosylation is found at threonine 442 and threonine 445. In terms of domain architecture, SEA 2 spans 574–687 (HELVVFFSLR…YSLDIEPADQ (114 aa)). N-linked (GlcNAc...) asparagine glycosylation is found at asparagine 595 and asparagine 619. A Heparin- and hyaluronan-binding motif is present at residues 624–632 (KQLEILSFR). N-linked (GlcNAc...) asparagine glycosylation is found at asparagine 633 and asparagine 651. The segment at 741–798 (ASQGQATPCRPPDHSTNQARQPSVKKLQRQQNKVVKKRNSELSATDFEELDDQDWEGN) is disordered. Residues 786 to 798 (DFEELDDQDWEGN) show a composition bias toward acidic residues.

Post-translationally, highly glycosylated (N- and O-linked carbohydrates and sialic acid).

The protein resides in the cell projection. It localises to the cilium. It is found in the photoreceptor outer segment. The protein localises to the secreted. Its subcellular location is the extracellular space. The protein resides in the extracellular matrix. It localises to the interphotoreceptor matrix. It is found in the photoreceptor inner segment. In terms of biological role, chondroitin sulfate-, heparin- and hyaluronan-binding protein. May serve to form a basic macromolecular scaffold comprising the insoluble interphotoreceptor matrix. This Rattus norvegicus (Rat) protein is Interphotoreceptor matrix proteoglycan 1.